Here is a 380-residue protein sequence, read N- to C-terminus: Cytochrome b (380 aa).

4 helical membrane passes run 34–54 (FGSL…FLAM), 78–99 (WLLR…YFHI), 114–134 (WNIG…GYVL), and 179–199 (FFTF…IHLL). Heme b-binding residues include H84 and H98. 2 residues coordinate heme b: H183 and H197. H202 provides a ligand contact to a ubiquinone. 4 helical membrane-spanning segments follow: residues 227–247 (YKDL…STFA), 289–309 (LGGV…PIIH), 321–341 (IAKT…WIGG), and 348–368 (FITI…LLIP).

This sequence belongs to the cytochrome b family. The cytochrome bc1 complex contains 3 respiratory subunits (MT-CYB, CYC1 and UQCRFS1), 2 core proteins (UQCRC1 and UQCRC2) and probably 6 low-molecular weight proteins. It depends on heme b as a cofactor.

The protein resides in the mitochondrion inner membrane. Its function is as follows. Component of the ubiquinol-cytochrome c reductase complex (complex III or cytochrome b-c1 complex) that is part of the mitochondrial respiratory chain. The b-c1 complex mediates electron transfer from ubiquinol to cytochrome c. Contributes to the generation of a proton gradient across the mitochondrial membrane that is then used for ATP synthesis. The chain is Cytochrome b (mt-cyb) from Pelophylax nigromaculatus (Black-spotted frog).